A 455-amino-acid chain; its full sequence is Bifunctional protein GlmU (455 aa).

Residues 1–226 form a pyrophosphorylase region; it reads MGLSVVILAA…EFEILGVNDR (226 aa). UDP-N-acetyl-alpha-D-glucosamine is bound by residues 8–11, Lys-22, Gln-73, 78–79, 99–101, Gly-136, Glu-151, Asn-166, and Asn-224; these read LAAG, GT, and YGD. Asp-101 lines the Mg(2+) pocket. Residue Asn-224 coordinates Mg(2+). The linker stretch occupies residues 227-247; sequence TQLASLERVWQRNVAEKIMAK. Residues 248–455 are N-acetyltransferase; it reads GVSIADPNRF…WQRSVKKTDK (208 aa). The UDP-N-acetyl-alpha-D-glucosamine site is built by Arg-330 and Lys-348. Catalysis depends on His-360, which acts as the Proton acceptor. Positions 363 and 374 each coordinate UDP-N-acetyl-alpha-D-glucosamine. Residues Ala-377, 383–384, Ser-402, Ala-420, and Arg-437 contribute to the acetyl-CoA site; that span reads NY.

This sequence in the N-terminal section; belongs to the N-acetylglucosamine-1-phosphate uridyltransferase family. It in the C-terminal section; belongs to the transferase hexapeptide repeat family. Homotrimer. Requires Mg(2+) as cofactor.

The protein localises to the cytoplasm. The catalysed reaction is alpha-D-glucosamine 1-phosphate + acetyl-CoA = N-acetyl-alpha-D-glucosamine 1-phosphate + CoA + H(+). It catalyses the reaction N-acetyl-alpha-D-glucosamine 1-phosphate + UTP + H(+) = UDP-N-acetyl-alpha-D-glucosamine + diphosphate. It functions in the pathway nucleotide-sugar biosynthesis; UDP-N-acetyl-alpha-D-glucosamine biosynthesis; N-acetyl-alpha-D-glucosamine 1-phosphate from alpha-D-glucosamine 6-phosphate (route II): step 2/2. Its pathway is nucleotide-sugar biosynthesis; UDP-N-acetyl-alpha-D-glucosamine biosynthesis; UDP-N-acetyl-alpha-D-glucosamine from N-acetyl-alpha-D-glucosamine 1-phosphate: step 1/1. The protein operates within bacterial outer membrane biogenesis; LPS lipid A biosynthesis. Catalyzes the last two sequential reactions in the de novo biosynthetic pathway for UDP-N-acetylglucosamine (UDP-GlcNAc). The C-terminal domain catalyzes the transfer of acetyl group from acetyl coenzyme A to glucosamine-1-phosphate (GlcN-1-P) to produce N-acetylglucosamine-1-phosphate (GlcNAc-1-P), which is converted into UDP-GlcNAc by the transfer of uridine 5-monophosphate (from uridine 5-triphosphate), a reaction catalyzed by the N-terminal domain. This chain is Bifunctional protein GlmU, found in Francisella tularensis subsp. tularensis (strain FSC 198).